A 400-amino-acid polypeptide reads, in one-letter code: Serine/threonine transporter SstT (400 aa).

The next 9 membrane-spanning stretches (helical) occupy residues 14–34 (IIIAIILGIGVALLFPTVTPY), 48–68 (SVAPILVFVLVLSSIANFQVG), 76–96 (VLLLYVVGMLLAAFSAVIASL), 136–156 (AISEANFIGILAWAIGLGLAM), 177–197 (IIHKVIAFAPVGIFGLVAVTF), 211–231 (LLVVLLGTMLFVALVINPILV), 285–305 (IPLGATVNMAGAAVTITVLTL), 311–331 (LGIHVDLATMIILSVVATISA), and 349–371 (CSLFGISSEIAMQVVAVGMIISV).

This sequence belongs to the dicarboxylate/amino acid:cation symporter (DAACS) (TC 2.A.23) family.

The protein localises to the cell inner membrane. It catalyses the reaction L-serine(in) + Na(+)(in) = L-serine(out) + Na(+)(out). It carries out the reaction L-threonine(in) + Na(+)(in) = L-threonine(out) + Na(+)(out). Its function is as follows. Involved in the import of serine and threonine into the cell, with the concomitant import of sodium (symport system). The protein is Serine/threonine transporter SstT of Acinetobacter baumannii (strain AB307-0294).